The chain runs to 270 residues: Probable aquaporin NIP-type (270 aa).

2 helical membrane-spanning segments follow: residues 45 to 65 and 72 to 92; these read LIAE…SVAV and VTFP…VYTV. Positions 101 to 103 match the NPA 1 motif; it reads NPA. The next 3 helical transmembrane spans lie at 121–141, 160–180, and 188–208; these read LYII…ALLF, SLAI…GVAT, and VAGI…GPIS. An NPA 2 motif is present at residues 213-215; the sequence is NPA. Residues 231–251 form a helical membrane-spanning segment; that stretch reads WVYVVGPIIGTLAGAFVYNLI.

The protein belongs to the MIP/aquaporin (TC 1.A.8) family. NIP (TC 1.A.8.12) subfamily. In terms of tissue distribution, pollen specific.

It localises to the membrane. Aquaporins facilitate the transport of water and small neutral solutes across cell membranes. The sequence is that of Probable aquaporin NIP-type from Nicotiana alata (Winged tobacco).